Here is a 213-residue protein sequence, read N- to C-terminus: Orotate phosphoribosyltransferase (213 aa).

Lys26 contributes to the 5-phospho-alpha-D-ribose 1-diphosphate binding site. Residue 34 to 35 (FF) participates in orotate binding. Residues 72–73 (YK), Arg99, Lys100, Lys103, His105, and 124–132 (DDVITAGTA) each bind 5-phospho-alpha-D-ribose 1-diphosphate. Orotate-binding residues include Thr128 and Arg156.

This sequence belongs to the purine/pyrimidine phosphoribosyltransferase family. PyrE subfamily. In terms of assembly, homodimer. Mg(2+) serves as cofactor.

It carries out the reaction orotidine 5'-phosphate + diphosphate = orotate + 5-phospho-alpha-D-ribose 1-diphosphate. It functions in the pathway pyrimidine metabolism; UMP biosynthesis via de novo pathway; UMP from orotate: step 1/2. In terms of biological role, catalyzes the transfer of a ribosyl phosphate group from 5-phosphoribose 1-diphosphate to orotate, leading to the formation of orotidine monophosphate (OMP). This is Orotate phosphoribosyltransferase from Salmonella arizonae (strain ATCC BAA-731 / CDC346-86 / RSK2980).